The chain runs to 227 residues: tRNA (guanine-N(7)-)-methyltransferase (227 aa).

The S-adenosyl-L-methionine site is built by Glu-58, Glu-83, Asp-110, and Asp-132. Residue Asp-132 is part of the active site. Residues Lys-136, Asp-168, and 205-208 (TRFE) contribute to the substrate site.

The protein belongs to the class I-like SAM-binding methyltransferase superfamily. TrmB family.

The enzyme catalyses guanosine(46) in tRNA + S-adenosyl-L-methionine = N(7)-methylguanosine(46) in tRNA + S-adenosyl-L-homocysteine. Its pathway is tRNA modification; N(7)-methylguanine-tRNA biosynthesis. Its function is as follows. Catalyzes the formation of N(7)-methylguanine at position 46 (m7G46) in tRNA. This is tRNA (guanine-N(7)-)-methyltransferase from Acidithiobacillus ferrooxidans (strain ATCC 23270 / DSM 14882 / CIP 104768 / NCIMB 8455) (Ferrobacillus ferrooxidans (strain ATCC 23270)).